We begin with the raw amino-acid sequence, 638 residues long: XK-related protein 6 (638 aa).

Disordered regions lie at residues 24-43 (VGSG…GGDG) and 82-117 (RSAA…PASP). Over residues 33–43 (PGGGGCGGGDG) the composition is skewed to gly residues. The next 7 membrane-spanning stretches (helical) occupy residues 127–147 (LWIV…LWLA), 158–178 (CFGL…SLSF), 315–335 (TLPC…LASY), 369–389 (VISF…FVVV), 410–430 (WEEI…WFNV), 439–459 (MFAY…LWYF), and 470–490 (AVPA…LMLL).

This sequence belongs to the XK family.

It localises to the cell membrane. This chain is XK-related protein 6, found in Mus musculus (Mouse).